Reading from the N-terminus, the 101-residue chain is Small ribosomal subunit protein bS18c (101 aa).

This sequence belongs to the bacterial ribosomal protein bS18 family. In terms of assembly, part of the 30S ribosomal subunit.

It localises to the plastid. The protein resides in the chloroplast. This chain is Small ribosomal subunit protein bS18c, found in Coffea arabica (Arabian coffee).